A 150-amino-acid chain; its full sequence is Small ribosomal subunit protein uS11 (150 aa).

Residues 126–150 form a disordered region; the sequence is GRIEDVTPTPSDSTRRKGGRRGRRL. Positions 141 to 150 are enriched in basic residues; that stretch reads RKGGRRGRRL.

The protein belongs to the universal ribosomal protein uS11 family. As to quaternary structure, component of the small ribosomal subunit (SSU). Mature N.crassa ribosomes consist of a small (40S) and a large (60S) subunit. The 40S small subunit contains 1 molecule of ribosomal RNA (18S rRNA) and at least 32 different proteins. The large 60S subunit contains 3 rRNA molecules (26S, 5.8S and 5S rRNA) and at least 42 different proteins.

It is found in the cytoplasm. Functionally, component of the ribosome, a large ribonucleoprotein complex responsible for the synthesis of proteins in the cell. The small ribosomal subunit (SSU) binds messenger RNAs (mRNAs) and translates the encoded message by selecting cognate aminoacyl-transfer RNA (tRNA) molecules. The large subunit (LSU) contains the ribosomal catalytic site termed the peptidyl transferase center (PTC), which catalyzes the formation of peptide bonds, thereby polymerizing the amino acids delivered by tRNAs into a polypeptide chain. The nascent polypeptides leave the ribosome through a tunnel in the LSU and interact with protein factors that function in enzymatic processing, targeting, and the membrane insertion of nascent chains at the exit of the ribosomal tunnel. uS11 is involved in nucleolar processing of pre-18S ribosomal RNA and ribosome assembly. This chain is Small ribosomal subunit protein uS11 (rps-14), found in Neurospora crassa (strain ATCC 24698 / 74-OR23-1A / CBS 708.71 / DSM 1257 / FGSC 987).